The sequence spans 569 residues: Endo-1,4-beta-xylanase 5 (569 aa).

Positions Met-1–Ser-25 are cleaved as a signal peptide. N-linked (GlcNAc...) asparagine glycosylation is found at Asn-197, Asn-261, and Asn-307. The region spanning Glu-209–Lys-500 is the GH10 domain. Glu-332 functions as the Proton donor in the catalytic mechanism. N-linked (GlcNAc...) asparagine glycosylation occurs at Asn-346. Glu-439 (nucleophile) is an active-site residue. Residues Asn-490, Asn-536, and Asn-544 are each glycosylated (N-linked (GlcNAc...) asparagine).

This sequence belongs to the glycosyl hydrolase 10 (cellulase F) family.

The catalysed reaction is Endohydrolysis of (1-&gt;4)-beta-D-xylosidic linkages in xylans.. It participates in glycan degradation; xylan degradation. Binds to and hydrolyzes insoluble and soluble xylan substrates. The protein is Endo-1,4-beta-xylanase 5 of Arabidopsis thaliana (Mouse-ear cress).